The following is a 64-amino-acid chain: Large ribosomal subunit protein bL35 (64 aa).

Belongs to the bacterial ribosomal protein bL35 family.

The chain is Large ribosomal subunit protein bL35 from Vibrio metschnikovii.